The primary structure comprises 255 residues: Cyclase-like protein 1 (255 aa).

An N-terminal signal peptide occupies residues 1 to 24 (MTRSVSFPLFLFAVVLSLSSSLLA).

Belongs to the Cyclase 1 superfamily.

The protein resides in the secreted. Its subcellular location is the extracellular space. The protein localises to the extracellular matrix. Acts as a negative regulator of fumonisin B1- and pathogen-induced programmed cell death (PCD), and regulates pathogen-induced symptom development. May function redundantly with CYCLASE2 for normal plant growth, development and viability. This chain is Cyclase-like protein 1, found in Arabidopsis thaliana (Mouse-ear cress).